Consider the following 496-residue polypeptide: Genome polyprotein (496 aa).

Residues 1–447 are Extracellular-facing; sequence SRCTHLENRD…HTVLGGAFNS (447 aa). 6 disulfide bridges follow: cysteine 3–cysteine 30, cysteine 60–cysteine 116, cysteine 60–cysteine 121, cysteine 74–cysteine 105, cysteine 92–cysteine 116, and cysteine 92–cysteine 121. The interval 98–111 is fusion peptide; sequence DRGWGNHCGLFGKG. Residue asparagine 154 is glycosylated (N-linked (GlcNAc...) asparagine; by host). Cystine bridges form between cysteine 186–cysteine 290 and cysteine 307–cysteine 338. A helical membrane pass occupies residues 448–468; the sequence is IFGGVGFLPKLLMGVALAWLG. At 469–479 the chain is on the cytoplasmic side; sequence LNTRNPTMSMS. A helical membrane pass occupies residues 480–496; it reads FLLAGGLVLAMTLGVGA.

As to quaternary structure, homodimer; in the endoplasmic reticulum and Golgi. In terms of processing, N-glycosylated.

It localises to the virion membrane. The protein resides in the host endoplasmic reticulum membrane. Binds to host cell surface receptor and mediates fusion between viral and cellular membranes. Envelope protein is synthesized in the endoplasmic reticulum in the form of heterodimer with protein prM. They play a role in virion budding in the ER, and the newly formed immature particle is covered with 60 spikes composed of heterodimer between precursor prM and envelope protein E. The virion is transported to the Golgi apparatus where the low pH causes dissociation of PrM-E heterodimers and formation of E homodimers. prM-E cleavage is ineficient, and many virions are only partially matured. These uncleaved prM would play a role in immune evasion. The protein is Genome polyprotein of Louping ill virus (strain Negishi 3248/49/P10) (Li).